The primary structure comprises 186 residues: Ribosome-recycling factor (186 aa).

It belongs to the RRF family.

The protein localises to the cytoplasm. Functionally, responsible for the release of ribosomes from messenger RNA at the termination of protein biosynthesis. May increase the efficiency of translation by recycling ribosomes from one round of translation to another. The sequence is that of Ribosome-recycling factor from Cupriavidus pinatubonensis (strain JMP 134 / LMG 1197) (Cupriavidus necator (strain JMP 134)).